The primary structure comprises 229 residues: Matrix protein (229 aa).

The segment covering 1 to 10 has biased composition (low complexity); that stretch reads MSSLKKILGL. The tract at residues 1-23 is disordered; sequence MSSLKKILGLKGKGKKSKKLGIA. The short motif at 2–4 is the dynamin binding element; that stretch reads SSL. Positions 24–27 match the PPXY motif motif; sequence PPPY. Positions 37–40 match the PTAP/PSAP motif motif; it reads PSAP.

It belongs to the vesiculoviruses matrix protein family. As to quaternary structure, homomultimer. Interacts with viral nucleocapsid; this interaction contributes to the virion assembly. Interacts with the viral envelope glycoprotein; this interaction contributes to the virion assembly. Interacts with host RAE1-NUP98 complex. Interacts with host NEDD4 and TSG101. Interacts with host dynamin. Interacts with host NDUFAF4; the interaction inhibits viral propagation and is independent of interferon activation. Interacts with host GTF2H5; the interaction may inhibit host transcription. Post-translationally, phosphorylated by host.

It localises to the virion. The protein resides in the host endomembrane system. It is found in the host nucleus membrane. Its subcellular location is the host nucleus. The protein localises to the host cytoplasm. Its function is as follows. Forms a double layer around the helical nucleocapsid, the inner matrix layer binding to the N helix and the outer matrix layer binding to the envelope glycoprotein. Plays a major role in assembly and budding of virion, by recruiting cellular partners of the ESCRT complexes that play a key role in releasing the budding particle from the host membrane. Condensates the ribonucleocapsid core during virus assembly. Inhibits the host mRNA nuclear export thereby inducing the shut off of cellular transcription and preventing the interferon signaling and the establishment of antiviral state in infected cells. This shutoff presumably inhibits interferon signaling and thus establishment of antiviral state in virus infected cells. Induces cell-rounding, cytoskeleton disorganization and apoptosis in infected cell. Inhibits host transcription, possibly through interaction with host DNA repair factor IIH/TFIIH GTF2H5 subunit. This Vesicular stomatitis Indiana virus (strain 98COE North America) (VSIV) protein is Matrix protein (M).